We begin with the raw amino-acid sequence, 233 residues long: Archaetidylserine synthase (233 aa).

8 consecutive transmembrane segments (helical) span residues 7-27 (ITSFIALPDLLSMLNASSGYL), 29-49 (ILLSIDGSLNAACILMLLAVL), 75-95 (SLSDVISFGVAPAILIYSAAV), 102-122 (ILVGPLIVLCGILRLSRFNVL), 126-146 (GKNFTGLPIPVAAVTISSFYL), 147-167 (TGFYSELSAAFIMIAVSVLMI), 180-200 (ASTALILIIATIISVAAVEIL), and 206-226 (VAGPVAIILFIATLTYIAVPI).

It belongs to the CDP-alcohol phosphatidyltransferase class-I family.

The protein localises to the membrane. It carries out the reaction CDP-2,3-bis-O-(geranylgeranyl)-sn-glycerol + L-serine = archaetidylserine + CMP + H(+). It catalyses the reaction CDP-2,3-bis-O-(phytanyl)-sn-glycerol + L-serine = 2,3-bis-O-phytanyl-sn-glycero-3-phospho-L-serine + CMP + H(+). It participates in membrane lipid metabolism; glycerophospholipid metabolism. Its activity is regulated as follows. Activated by Mn(2+) ions. In terms of biological role, involved in the lipid biosynthesis. Catalyzes the formation of unsaturated archaetidylserine from CDP-unsaturated archaeol and L-serine. Activity with ester-linked substrate analogs containing straight aliphatic chains (typical bacterial substrates) is two to three times higher than that with the corresponding ether-type substrate (typical archaeal substrates). Both enantiomers of CDP-unsaturated archaeols with ether-linked geranylgeranyl chains and CDP-saturated archaeol with ether-linked phytanyl chains are similarly active. The enzyme also accepts D-serine, although activity is only about third of that with L-serine. In Methanothermobacter thermautotrophicus (strain ATCC 29096 / DSM 1053 / JCM 10044 / NBRC 100330 / Delta H) (Methanobacterium thermoautotrophicum), this protein is Archaetidylserine synthase.